Here is a 367-residue protein sequence, read N- to C-terminus: MSTEVNANQSPNAESRQEAARSGERDKALNLVLGQIERNFGKGSIMRLGDASRMRVETISTGALTLDLALGGGYPKGRVVEVYGPESSGKTTLTLHAIAEVQRRGGVAAFVDAEHALDPVYAASLGVDVENLLVSQPDTGEMALEIVDQLIRSAAVELVVVDSVAALTPRAEIEGEMGDHVIGSQARLMSQAMRKITGNIGKSGCTVIFLNQLRLKIGVTYGNPETTTGGNALKFYASVRLDIRRIQTLKRGTDEYGIRAKVKVAKNKVAPPFRIAEFDILFGKGISTIGCLLDLAEETNIVARKGAWYSYEGDNIGQGRDNTITWLEQNTEAKEKIEKLVRQKLTEGSEVSSNSMRPLTTANRKAA.

Residues 1-14 are compositionally biased toward polar residues; that stretch reads MSTEVNANQSPNAE. Positions 1-24 are disordered; sequence MSTEVNANQSPNAESRQEAARSGE. Residues 15–24 are compositionally biased toward basic and acidic residues; sequence SRQEAARSGE. 84–91 is a binding site for ATP; it reads GPESSGKT. A disordered region spans residues 348 to 367; that stretch reads GSEVSSNSMRPLTTANRKAA. Over residues 349–367 the composition is skewed to polar residues; sequence SEVSSNSMRPLTTANRKAA.

The protein belongs to the RecA family.

It is found in the cytoplasm. Its function is as follows. Can catalyze the hydrolysis of ATP in the presence of single-stranded DNA, the ATP-dependent uptake of single-stranded DNA by duplex DNA, and the ATP-dependent hybridization of homologous single-stranded DNAs. It interacts with LexA causing its activation and leading to its autocatalytic cleavage. The protein is Protein RecA of Prochlorococcus marinus (strain MIT 9211).